Consider the following 406-residue polypeptide: Putative phosphate permease PH0640 (406 aa).

11 helical membrane-spanning segments follow: residues 2 to 22, 45 to 65, 83 to 103, 114 to 134, 140 to 160, 182 to 202, 207 to 227, 265 to 285, 288 to 308, 330 to 350, and 385 to 405; these read IPID…AWAI, AVLI…KTVT, VLIY…IIAT, SIIG…IVNW, VVLS…LVFR, FWIG…VLHG, IGIL…TSML, VANA…GLAG, VPVP…GVAT, FTID…GMPI, and FVTV…LLLI.

It belongs to the inorganic phosphate transporter (PiT) (TC 2.A.20) family.

The protein resides in the cell membrane. Its function is as follows. Potential transporter for phosphate. The chain is Putative phosphate permease PH0640 from Pyrococcus horikoshii (strain ATCC 700860 / DSM 12428 / JCM 9974 / NBRC 100139 / OT-3).